The chain runs to 498 residues: Ribulose bisphosphate carboxylase large chain (498 aa).

Residues 1–2 (MS) constitute a propeptide that is removed on maturation. P3 bears the N-acetylproline mark. K14 is subject to N6,N6,N6-trimethyllysine. Positions 123 and 173 each coordinate substrate. Catalysis depends on K175, which acts as the Proton acceptor. K177 provides a ligand contact to substrate. K201, D203, and E204 together coordinate Mg(2+). K201 is subject to N6-carboxylysine. H294 acts as the Proton acceptor in catalysis. The substrate site is built by R295, H327, and S379. The interval 471-498 (PVDTLDPNDKKQRDNEDTLADKLFGDKG) is disordered.

It belongs to the RuBisCO large chain family. Type I subfamily. As to quaternary structure, heterohexadecamer of 8 large chains and 8 small chains; disulfide-linked. The disulfide link is formed within the large subunit homodimers. Mg(2+) serves as cofactor. Post-translationally, the disulfide bond which can form in the large chain dimeric partners within the hexadecamer appears to be associated with oxidative stress and protein turnover.

Its subcellular location is the plastid. It catalyses the reaction 2 (2R)-3-phosphoglycerate + 2 H(+) = D-ribulose 1,5-bisphosphate + CO2 + H2O. It carries out the reaction D-ribulose 1,5-bisphosphate + O2 = 2-phosphoglycolate + (2R)-3-phosphoglycerate + 2 H(+). Its function is as follows. RuBisCO catalyzes two reactions: the carboxylation of D-ribulose 1,5-bisphosphate, the primary event in carbon dioxide fixation, as well as the oxidative fragmentation of the pentose substrate in the photorespiration process. Both reactions occur simultaneously and in competition at the same active site. The protein is Ribulose bisphosphate carboxylase large chain (rbcL) of Cuscuta reflexa (Southern Asian dodder).